A 462-amino-acid polypeptide reads, in one-letter code: MKDEKTMDKIVSLAKNRGFVFAGSEIYGGLANSWDYGPLGVELKNNVKKLWWKKFVQDNTYNVGLDCAILMNSEVWVASGHLGGFSDPLMDCKECKSRFRADKIVEDYLTEQGAEVASADGWSNEKLENFIKDKHIKCPKCGKENFTSIRKFNLMFKTFQGVTEDASSEIYLRPETAQGIFVNFKNVQRSSRKKVPFGIGQIGKAFRNEITPGNFTFRTREFEQMELEFFCKPGTDLEWFKYWKDYCWSFLLDLGINKENLRFRDHSAEELVFYSKATSDIEYKFPFGWGELWGVADRTDYDLKKHMDHSGEDMNYLDPSTNEKYVPYVIEPSLGADRVALAFLIDAYDEEELEGGDQRIVLHFHPQIAPIKAAVLPLSKKLSEKALDVYSKISSKFNIEYDETGSIGKRYRRQDEIGTPYCITVDFDTLEDEAVTIRDRDSMSQVRVKIEELEKYLEEKIK.

Positions 100 and 175 each coordinate substrate. ATP is bound by residues 207–209 (RNE), 217–222 (FRTREF), 291–292 (EL), and 335–338 (GADR). 222–226 (FEQME) contacts substrate. 331–335 (EPSLG) is a substrate binding site.

The protein belongs to the class-II aminoacyl-tRNA synthetase family. In terms of assembly, homodimer.

Its subcellular location is the cytoplasm. The enzyme catalyses tRNA(Gly) + glycine + ATP = glycyl-tRNA(Gly) + AMP + diphosphate. In terms of biological role, catalyzes the attachment of glycine to tRNA(Gly). The polypeptide is Glycine--tRNA ligase (Clostridium acetobutylicum (strain ATCC 824 / DSM 792 / JCM 1419 / IAM 19013 / LMG 5710 / NBRC 13948 / NRRL B-527 / VKM B-1787 / 2291 / W)).